The primary structure comprises 307 residues: tRNA pseudouridine synthase B (307 aa).

Aspartate 38 serves as the catalytic Nucleophile.

Belongs to the pseudouridine synthase TruB family. Type 1 subfamily.

The enzyme catalyses uridine(55) in tRNA = pseudouridine(55) in tRNA. Its function is as follows. Responsible for synthesis of pseudouridine from uracil-55 in the psi GC loop of transfer RNAs. This chain is tRNA pseudouridine synthase B, found in Bacillus thuringiensis (strain Al Hakam).